The primary structure comprises 156 residues: MRCPYCGHLEDRVVDSRETQDGQATRRRRACLSCERRFTTYERIEDVLPQVVKKDGRREAFDRAKIVEGVATACQKRPVSAEQVEALVSAVERQVQELGEREIRTAVIGEAVMQRLRTLDEVAYVRFASVYRAFRDVGEFMTELAGLARKDGGEER.

A zinc finger spans residues cysteine 3–cysteine 34. The region spanning proline 49–glutamate 139 is the ATP-cone domain.

The protein belongs to the NrdR family. Requires Zn(2+) as cofactor.

Functionally, negatively regulates transcription of bacterial ribonucleotide reductase nrd genes and operons by binding to NrdR-boxes. This chain is Transcriptional repressor NrdR, found in Anaeromyxobacter dehalogenans (strain 2CP-C).